The chain runs to 241 residues: Phosphoglycolate phosphatase (241 aa).

The Nucleophile role is filled by Asp-8. Residues Asp-8, Asp-10, and Asp-174 each coordinate Mg(2+).

Belongs to the HAD-like hydrolase superfamily. CbbY/CbbZ/Gph/YieH family. Requires Mg(2+) as cofactor.

The enzyme catalyses 2-phosphoglycolate + H2O = glycolate + phosphate. It participates in organic acid metabolism; glycolate biosynthesis; glycolate from 2-phosphoglycolate: step 1/1. Functionally, specifically catalyzes the dephosphorylation of 2-phosphoglycolate. Is involved in the dissimilation of the intracellular 2-phosphoglycolate formed during the DNA repair of 3'-phosphoglycolate ends, a major class of DNA lesions induced by oxidative stress. The sequence is that of Phosphoglycolate phosphatase from Rhodospirillum rubrum (strain ATCC 11170 / ATH 1.1.1 / DSM 467 / LMG 4362 / NCIMB 8255 / S1).